The chain runs to 402 residues: Diaminopimelate decarboxylase (402 aa).

An N6-(pyridoxal phosphate)lysine modification is found at lysine 45. Residues glycine 224 and glutamate 259–arginine 262 each bind pyridoxal 5'-phosphate. Substrate contacts are provided by arginine 262, arginine 298, and tyrosine 302. Cysteine 327 serves as the catalytic Proton donor. 2 residues coordinate substrate: glutamate 328 and tyrosine 356. Pyridoxal 5'-phosphate is bound at residue tyrosine 356.

This sequence belongs to the Orn/Lys/Arg decarboxylase class-II family. LysA subfamily. Homodimer. Pyridoxal 5'-phosphate serves as cofactor.

It carries out the reaction meso-2,6-diaminopimelate + H(+) = L-lysine + CO2. It functions in the pathway amino-acid biosynthesis; L-lysine biosynthesis via DAP pathway; L-lysine from DL-2,6-diaminopimelate: step 1/1. Functionally, specifically catalyzes the decarboxylation of meso-diaminopimelate (meso-DAP) to L-lysine. The chain is Diaminopimelate decarboxylase from Campylobacter jejuni subsp. jejuni serotype O:2 (strain ATCC 700819 / NCTC 11168).